The following is a 63-amino-acid chain: MPIAQIHILEGRSDEQKETLIREVSEAISRSLDAPLTSVRVIITEMAKGHFGIGGELASKVRR.

The active-site Proton acceptor; via imino nitrogen is the P2.

The protein belongs to the 4-oxalocrotonate tautomerase family. Homohexamer.

It carries out the reaction (2Z,4E)-2-hydroxyhexa-2,4-dienedioate = (3E)-2-oxohex-3-enedioate. The protein operates within xenobiotic degradation; toluene degradation. It participates in xenobiotic degradation; xylene degradation. Its function is as follows. Catalyzes the ketonization of 2-hydroxymuconate stereoselectively to yield 2-oxo-3-hexenedioate. In Pseudomonas putida (Arthrobacter siderocapsulatus), this protein is 2-hydroxymuconate tautomerase (xylH).